Reading from the N-terminus, the 312-residue chain is Large ribosomal subunit protein uL15m (312 aa).

Residues 63–89 (RIRKGRGPSSGYGKTAGRGTKGQKAHG) form a disordered region. Residues 70–82 (PSSGYGKTAGRGT) are compositionally biased toward gly residues.

Belongs to the universal ribosomal protein uL15 family. Component of the mitochondrial large ribosomal subunit (mt-LSU). Mature N.crassa 74S mitochondrial ribosomes consist of a small (37S) and a large (54S) subunit. The 37S small subunit contains a 16S ribosomal RNA (16S mt-rRNA) and 32 different proteins. The 54S large subunit contains a 23S rRNA (23S mt-rRNA) and 42 different proteins.

It is found in the mitochondrion. Functionally, component of the mitochondrial ribosome (mitoribosome), a dedicated translation machinery responsible for the synthesis of mitochondrial genome-encoded proteins, including at least some of the essential transmembrane subunits of the mitochondrial respiratory chain. The mitoribosomes are attached to the mitochondrial inner membrane and translation products are cotranslationally integrated into the membrane. The chain is Large ribosomal subunit protein uL15m (mrpl10) from Neurospora crassa (strain ATCC 24698 / 74-OR23-1A / CBS 708.71 / DSM 1257 / FGSC 987).